The primary structure comprises 68 residues: Negative regulatory protein YxlD (68 aa).

2 consecutive transmembrane segments (helical) span residues 5-25 (EIII…FLFI) and 37-57 (WGIV…FFVI).

It localises to the cell membrane. In terms of biological role, together with YxlE, is important for negative regulation of sigma Y activity, being the major negative regulator. The polypeptide is Negative regulatory protein YxlD (yxlD) (Bacillus subtilis (strain 168)).